Consider the following 125-residue polypeptide: Fluoride-specific ion channel FluC (125 aa).

A run of 4 helical transmembrane segments spans residues 5–25 (FVFI…LAGF), 33–53 (FFPF…GFLW), 69–89 (FVLV…LETG), and 101–121 (IVNL…GIVL). Residues Gly76 and Thr79 each contribute to the Na(+) site.

Belongs to the fluoride channel Fluc/FEX (TC 1.A.43) family.

The protein localises to the cell inner membrane. It carries out the reaction fluoride(in) = fluoride(out). Na(+) is not transported, but it plays an essential structural role and its presence is essential for fluoride channel function. Its function is as follows. Fluoride-specific ion channel. Important for reducing fluoride concentration in the cell, thus reducing its toxicity. The chain is Fluoride-specific ion channel FluC from Desulforapulum autotrophicum (strain ATCC 43914 / DSM 3382 / VKM B-1955 / HRM2) (Desulfobacterium autotrophicum).